An 873-amino-acid chain; its full sequence is DNA mismatch repair protein MutS (873 aa).

The tract at residues 1–34 is disordered; sequence MAAIPTPRLHRGVTHLSRQTKSRARHPMSTPQHT. A compositionally biased stretch (basic residues) spans 8–26; it reads RLHRGVTHLSRQTKSRARH. 635 to 642 contacts ATP; that stretch reads GPNMGGKS.

The protein belongs to the DNA mismatch repair MutS family.

Functionally, this protein is involved in the repair of mismatches in DNA. It is possible that it carries out the mismatch recognition step. This protein has a weak ATPase activity. The protein is DNA mismatch repair protein MutS of Chromobacterium violaceum (strain ATCC 12472 / DSM 30191 / JCM 1249 / CCUG 213 / NBRC 12614 / NCIMB 9131 / NCTC 9757 / MK).